A 270-amino-acid polypeptide reads, in one-letter code: Shikimate dehydrogenase (NADP(+)) (270 aa).

Shikimate contacts are provided by residues 14–16 (SKS) and threonine 61. Catalysis depends on lysine 65, which acts as the Proton acceptor. Shikimate-binding residues include asparagine 86 and aspartate 101. NADP(+) contacts are provided by residues 126–130 (GAGGA), 150–155 (NRTVSK), and methionine 213. Tyrosine 215 contributes to the shikimate binding site. Glycine 237 is an NADP(+) binding site.

Belongs to the shikimate dehydrogenase family. Homodimer.

The catalysed reaction is shikimate + NADP(+) = 3-dehydroshikimate + NADPH + H(+). It participates in metabolic intermediate biosynthesis; chorismate biosynthesis; chorismate from D-erythrose 4-phosphate and phosphoenolpyruvate: step 4/7. In terms of biological role, involved in the biosynthesis of the chorismate, which leads to the biosynthesis of aromatic amino acids. Catalyzes the reversible NADPH linked reduction of 3-dehydroshikimate (DHSA) to yield shikimate (SA). The sequence is that of Shikimate dehydrogenase (NADP(+)) from Hahella chejuensis (strain KCTC 2396).